We begin with the raw amino-acid sequence, 156 residues long: Transcription antitermination protein NusB (156 aa).

It belongs to the NusB family.

In terms of biological role, involved in transcription antitermination. Required for transcription of ribosomal RNA (rRNA) genes. Binds specifically to the boxA antiterminator sequence of the ribosomal RNA (rrn) operons. This is Transcription antitermination protein NusB from Xanthomonas oryzae pv. oryzae (strain MAFF 311018).